The primary structure comprises 149 residues: Calmodulin (149 aa).

Residue Ala-2 is modified to N-acetylalanine. EF-hand domains are found at residues 8–43 (EQIA…LGQN), 44–79 (PTEA…KMKD), 81–116 (DSEE…LGEK), and 117–149 (LTDE…MTAK). Residues Asp-21, Asp-23, Asp-25, Thr-27, Glu-32, Asp-59, Asn-61, Thr-63, Glu-68, Asp-94, Asp-96, Asn-98, Tyr-100, and Glu-105 each coordinate Ca(2+). N6,N6,N6-trimethyllysine is present on Lys-116. Ca(2+) is bound by residues Asp-130, Asp-132, Asp-134, Gln-136, and Glu-141.

This sequence belongs to the calmodulin family.

Calmodulin acts as part of a calcium signal transduction pathway by mediating the control of a large number of enzymes, ion channels, aquaporins and other proteins through calcium-binding. Calcium-binding is required for the activation of calmodulin. Among the enzymes to be stimulated by the calmodulin-calcium complex are a number of protein kinases, such as myosin light-chain kinases and calmodulin-dependent protein kinase type II (CaMK2), and phosphatases. The sequence is that of Calmodulin from Myxine glutinosa (Atlantic hagfish).